The following is a 401-amino-acid chain: Short chain dehydrogenase/reductase dpchH (401 aa).

A glycan (N-linked (GlcNAc...) asparagine) is linked at Asn16. A helical transmembrane segment spans residues 51 to 71 (VRAVDVLFGTFLYVPLGILFL). Residues 72–80 (KKSLSGFGD), 99–100 (TG), and 118–120 (AKV) contribute to the NAD(+) site. Asn242 carries an N-linked (GlcNAc...) asparagine glycan. The active-site Proton acceptor is Tyr275. NAD(+)-binding positions include 275–279 (YGTSK) and 308–310 (GTI). The N-linked (GlcNAc...) asparagine glycan is linked to Asn386.

Its subcellular location is the membrane. It functions in the pathway secondary metabolite biosynthesis; terpenoid biosynthesis. Functionally, short chain dehydrogenase/reductase; part of the gene cluster that mediates the biosynthesis of the diterpenoid pyrones higginsianins A and B. The first step of the pathway is the synthesis of the alpha-pyrone moiety by the polyketide synthase dpchA via condensation of one acetyl-CoA starter unit with 3 malonyl-CoA units and 2 methylations. The alpha-pyrone is then combined with geranylgeranyl pyrophosphate (GGPP) formed by the GGPP synthase dpchD through the action of the prenyltransferase dpchC to yield a linear alpha-pyrone diterpenoid. Subsequent steps in the diterpenoid pyrone biosynthetic pathway involve the decalin core formation, which is initiated by the epoxidation of the C10-C11 olefin by the FAD-dependent oxidoreductase dpchE, and is followed by a cyclization cascade catalyzed by the terpene cyclase dpchB. The short chain dehydrogenase/reductase dpchG then oxidizes the 8S hydroxy group to a ketone and the short chain dehydrogenase/reductase dpchH reduces the ketone to the 8R hydroxy group to yield higginsianin B. Finally, the FAD-dependent oxidoreductase dpchF converts higginsianin B into higginsianin A. The sequence is that of Short chain dehydrogenase/reductase dpchH from Colletotrichum higginsianum (strain IMI 349063) (Crucifer anthracnose fungus).